Reading from the N-terminus, the 109-residue chain is Small ribosomal subunit protein uS17 (109 aa).

Belongs to the universal ribosomal protein uS17 family. As to quaternary structure, part of the 30S ribosomal subunit.

Its function is as follows. One of the primary rRNA binding proteins, it binds specifically to the 5'-end of 16S ribosomal RNA. The polypeptide is Small ribosomal subunit protein uS17 (Halobacterium salinarum (strain ATCC 29341 / DSM 671 / R1)).